The chain runs to 206 residues: MASRRRVLLKVIILGDSGVGKTSLMNQFVNRKFSNQYKATIGADFLTKEVQIDDRIFTLQIWDTAGQERFQSLGVAFYRGADCCVLVNDVNVMKSFENLNNWREEFLIQASPSDPENFPFVVLGNKTDVDGGKSRVVTEKKAKSWCASKGNIPYFETSAKDGVNVDAAFECIAKNALKNEPEEEVYLPDTIDVAGARQQRSTGCEC.

Residue 15 to 22 (GDSGVGKT) coordinates GTP. The short motif at 37–45 (YKATIGADF) is the Effector region element. GTP contacts are provided by residues 63–67 (DTAGQ), 125–128 (NKTD), and 158–159 (SA). 2 S-geranylgeranyl cysteine lipidation sites follow: C204 and C206. C206 is modified (cysteine methyl ester).

Belongs to the small GTPase superfamily. Rab family.

It is found in the cell membrane. Its function is as follows. Intracellular vesicle trafficking and protein transport. This is Ras-related protein RABG3c (RABG3C) from Arabidopsis thaliana (Mouse-ear cress).